The chain runs to 273 residues: Endochitinase EP3 (273 aa).

Residues 1–28 form the signal peptide; the sequence is MLTPTISKSISLVTILLVLQAFSNTTKA. N-linked (GlcNAc...) asparagine glycosylation occurs at Asn24. Residues 29-63 form the Chitin-binding type-1 domain; the sequence is QNCGCSSELCCSQFGFCGNTSDYCGVGCQQGPCFA. Cystine bridges form between Cys31/Cys39, Cys33/Cys45, Cys38/Cys52, and Cys56/Cys61. Residue Asn47 is glycosylated (N-linked (GlcNAc...) asparagine). The catalytic stretch occupies residues 70-273; the sequence is VSVAEIVTQE…GVDPGNNLTC (204 aa). Glu136 functions as the Proton donor in the catalytic mechanism. Asn157 and Asn270 each carry an N-linked (GlcNAc...) asparagine glycan.

This sequence belongs to the glycosyl hydrolase 19 family. Chitinase class I subfamily. As to expression, expressed in cells surrounding embryos, stems, seedlings, pollen, roots, shoots, inflorescence, flowers, siliques and leaves. Present in seedpods and seed embryos, but not in roots, inflorescence stems, leaves and flowers.

It carries out the reaction Random endo-hydrolysis of N-acetyl-beta-D-glucosaminide (1-&gt;4)-beta-linkages in chitin and chitodextrins.. Its function is as follows. Probably involved in hypersensitive reaction upon Xanthomonas campestris infection. The chain is Endochitinase EP3 from Arabidopsis thaliana (Mouse-ear cress).